Here is a 73-residue protein sequence, read N- to C-terminus: MFGLGAPELILILILALIIFGPGKLPEVGRALGKGIREFKNATNSVTEEIKEAAKIDDGNNNSDKEKATRQAS.

The chain crosses the membrane as a helical span at residues 1–21 (MFGLGAPELILILILALIIFG). The segment at 52 to 73 (EAAKIDDGNNNSDKEKATRQAS) is disordered.

Belongs to the TatA/E family. As to quaternary structure, forms a complex with TatC.

It localises to the cell membrane. Functionally, part of the twin-arginine translocation (Tat) system that transports large folded proteins containing a characteristic twin-arginine motif in their signal peptide across membranes. TatA could form the protein-conducting channel of the Tat system. This is Sec-independent protein translocase protein TatA from Moorella thermoacetica (strain ATCC 39073 / JCM 9320).